Consider the following 651-residue polypeptide: Cylicin-1 (651 aa).

Disordered stretches follow at residues leucine 110–asparagine 241 and asparagine 267–serine 615. 2 stretches are compositionally biased toward basic and acidic residues: residues lysine 111–lysine 129 and glutamine 146–lysine 173. Positions glutamine 186–cysteine 195 are enriched in polar residues. A compositionally biased stretch (basic and acidic residues) spans serine 196–asparagine 205. Residues serine 230–asparagine 241 show a composition bias toward polar residues. The segment covering asparagine 271–threonine 281 has biased composition (low complexity). Tandem repeats lie at residues leucine 278–aspartate 305, alanine 306–aspartate 342, glutamate 343–aspartate 379, alanine 380–glutamate 417, serine 418–aspartate 453, serine 454–glutamate 491, leucine 492–glycine 531, and phenylalanine 532–glycine 553. Composition is skewed to basic and acidic residues over residues threonine 284–lysine 308, lysine 318–glutamate 331, glycine 338–glutamate 368, glycine 375–lysine 402, leucine 413–glutamate 441, and serine 448–glutamate 482. Residues aspartate 495 to serine 505 are compositionally biased toward basic residues. A compositionally biased stretch (basic and acidic residues) spans lysine 506–glutamate 518. Over residues lysine 529–isoleucine 538 the composition is skewed to polar residues. The tract at residues phenylalanine 532–glycine 553 is 8 X approximate tandem repeats. Basic and acidic residues predominate over residues threonine 587–proline 607.

As to quaternary structure, interacts with proteins of spermatozoa head including ACTL7A, CCIN, FAM209A and SPACA1; the interactions may be necessary for proper acrosome attachment to the nuclear envelope. In terms of tissue distribution, testis.

It localises to the cytoplasm. It is found in the cytoskeleton. The protein resides in the perinuclear theca. Its subcellular location is the calyx. Functionally, plays a role in the establishment of normal sperm morphology during spermatogenesis and is required for acrosome attachment to the nuclear envelope. The chain is Cylicin-1 (CYLC1) from Homo sapiens (Human).